The following is a 216-amino-acid chain: uncharacterized protein (216 aa).

4Fe-4S ferredoxin-type domains are found at residues 160 to 189 and 188 to 216; these read DDKP…IDEK and EKPK…ALLP. [4Fe-4S] cluster-binding residues include Cys169, Cys172, Cys175, Cys179, Cys197, Cys200, Cys203, and Cys207.

It belongs to the FrhG family.

This is an uncharacterized protein from Methanocaldococcus jannaschii (strain ATCC 43067 / DSM 2661 / JAL-1 / JCM 10045 / NBRC 100440) (Methanococcus jannaschii).